Here is a 262-residue protein sequence, read N- to C-terminus: Carbonic anhydrase 1 (262 aa).

Ala2 is subject to N-acetylalanine. Positions 4 to 261 constitute an Alpha-carbonic anhydrase domain; the sequence is LNWSYEGENG…LKGRQVKASF (258 aa). Catalysis depends on His65, which acts as the Proton donor/acceptor. The Zn(2+) site is built by His95, His97, and His120. Substrate is bound by residues Thr200 and 200–201; that span reads TH.

This sequence belongs to the alpha-carbonic anhydrase family. Zn(2+) serves as cofactor.

It localises to the cytoplasm. It catalyses the reaction hydrogencarbonate + H(+) = CO2 + H2O. The enzyme catalyses urea = cyanamide + H2O. Its activity is regulated as follows. Inhibited by acetazolamide. Catalyzes the reversible hydration of carbon dioxide. Can hydrate cyanamide to urea. The polypeptide is Carbonic anhydrase 1 (CA1) (Monodelphis domestica (Gray short-tailed opossum)).